Reading from the N-terminus, the 362-residue chain is Glutamate--cysteine ligase (362 aa).

This sequence belongs to the glutamate--cysteine ligase type 2 family. YbdK subfamily.

The catalysed reaction is L-cysteine + L-glutamate + ATP = gamma-L-glutamyl-L-cysteine + ADP + phosphate + H(+). Functionally, catalyzes the synthesis of gamma-glutamylcysteine (gamma-GC), the main low-molecular-weight thiol compound instead of glutathione in halophilic archaea. The polypeptide is Glutamate--cysteine ligase (Natronomonas pharaonis (strain ATCC 35678 / DSM 2160 / CIP 103997 / JCM 8858 / NBRC 14720 / NCIMB 2260 / Gabara) (Halobacterium pharaonis)).